The primary structure comprises 223 residues: Probable transaldolase (223 aa).

K92 acts as the Schiff-base intermediate with substrate in catalysis.

This sequence belongs to the transaldolase family. Type 3B subfamily.

It localises to the cytoplasm. The enzyme catalyses D-sedoheptulose 7-phosphate + D-glyceraldehyde 3-phosphate = D-erythrose 4-phosphate + beta-D-fructose 6-phosphate. The protein operates within carbohydrate degradation; pentose phosphate pathway; D-glyceraldehyde 3-phosphate and beta-D-fructose 6-phosphate from D-ribose 5-phosphate and D-xylulose 5-phosphate (non-oxidative stage): step 2/3. In terms of biological role, transaldolase is important for the balance of metabolites in the pentose-phosphate pathway. In Thermus thermophilus (strain ATCC 27634 / DSM 579 / HB8), this protein is Probable transaldolase.